The sequence spans 777 residues: uncharacterized protein (777 aa).

Disordered regions lie at residues 1-101, 128-150, 219-267, 334-366, 391-466, 529-577, 590-622, and 713-751; these read MNNN…NLSN, SYNNNNNNNNNNKNNNNNINDDN, HHIH…NNMN, SLPFSSLSDNNGDDDDDGIDDGIDDGIDDGIDD, ISNS…ATIS, KNLN…NNKG, LAQEPNDEQNKTKKELEEVKEEEEEEEEEISTI, and EKQGGDDPEDSSDSDSDSDSNSNSDSSDLGNITVRKWKP. Low complexity-rich tracts occupy residues 128 to 147 and 243 to 265; these read SYNNNNNNNNNNKNNNNNIN and NNNNNNNNNNNNNNNNNINNHNN. Polar residues predominate over residues 334–343; the sequence is SLPFSSLSDN. Positions 344 to 366 are enriched in acidic residues; the sequence is NGDDDDDGIDDGIDDGIDDGIDD. Residues 391–407 show a composition bias toward polar residues; it reads ISNSFHQNQSPCNNSFK. Low complexity-rich tracts occupy residues 408 to 466 and 532 to 574; these read NNNN…ATIS and NNNN…NNKN. Residues 597–606 are compositionally biased toward basic and acidic residues; it reads EQNKTKKELE. Acidic residues-rich tracts occupy residues 607–620 and 718–730; these read EVKEEEEEEEEEIS and DDPEDSSDSDSDS. Low complexity predominate over residues 731–740; the sequence is DSNSNSDSSD.

This is an uncharacterized protein from Dictyostelium discoideum (Social amoeba).